Here is a 231-residue protein sequence, read N- to C-terminus: Probable septum site-determining protein MinC (231 aa).

It belongs to the MinC family. As to quaternary structure, interacts with MinD and FtsZ.

Its function is as follows. Cell division inhibitor that blocks the formation of polar Z ring septums. Rapidly oscillates between the poles of the cell to destabilize FtsZ filaments that have formed before they mature into polar Z rings. Prevents FtsZ polymerization. This Bradyrhizobium diazoefficiens (strain JCM 10833 / BCRC 13528 / IAM 13628 / NBRC 14792 / USDA 110) protein is Probable septum site-determining protein MinC.